Consider the following 1872-residue polypeptide: Plexin-A3 (1872 aa).

Positions 1-19 (MHTVCLLPLLFFTIGGCLG) are cleaved as a signal peptide. A Sema domain is found at 20 to 489 (SSRPFRTFVV…SEKQVSQLPV (470 aa)). Over 20–1220 (SSRPFRTFVV…ITADRALTLP (1201 aa)) the chain is Extracellular. The N-linked (GlcNAc...) asparagine glycan is linked to N60. Cystine bridges form between C78-C87, C113-C121, C267-C388, C283-C339, C357-C376, C492-C509, C498-C540, C501-C518, and C512-C524. An N-linked (GlcNAc...) asparagine glycan is attached at N549. C575 and C595 are disulfide-bonded. IPT/TIG domains are found at residues 841 to 934 (PRIT…YSFV), 936 to 1021 (PTLD…YTYT), 1024 to 1123 (PTVT…FTYY), and 1126 to 1212 (PSFE…LHIT). An N-linked (GlcNAc...) asparagine glycan is attached at N1163. A helical transmembrane segment spans residues 1221 to 1241 (AMVGLAAGGGLLLLAITVVLV). Residues 1240-1294 (LVAYKRKTQDADRTLKRLQLQMDNLESRVALECKEAFAELQTDINELTNHMDGVQ) adopt a coiled-coil conformation. Topologically, residues 1242–1872 (AYKRKTQDAD…QIITLVSSSS (631 aa)) are cytoplasmic. The residue at position 1597 (S1597) is a Phosphoserine.

Belongs to the plexin family.

Its subcellular location is the cell membrane. Functionally, coreceptor for SEMA3A and SEMA3F. Necessary for signaling by class 3 semaphorins and subsequent remodeling of the cytoskeleton. Plays a role in axon guidance in the developing nervous system. Regulates the migration of sympathetic neurons, but not of neural crest precursors. Required for normal dendrite spine morphology in pyramidal neurons. May play a role in regulating semaphorin-mediated programmed cell death in the developing nervous system. Class 3 semaphorins bind to a complex composed of a neuropilin and a plexin. The plexin modulates the affinity of the complex for specific semaphorins, and its cytoplasmic domain is required for the activation of down-stream signaling events in the cytoplasm. The chain is Plexin-A3 (Plxna3) from Rattus norvegicus (Rat).